Here is a 273-residue protein sequence, read N- to C-terminus: Large ribosomal subunit protein uL2 (273 aa).

The segment at 221–263 (RGTAMNPVDHPHGGGEGRNFGKHPVTPWGVQTKGKKTRHNKRT) is disordered. Residues 253–263 (KGKKTRHNKRT) show a composition bias toward basic residues.

This sequence belongs to the universal ribosomal protein uL2 family. As to quaternary structure, part of the 50S ribosomal subunit. Forms a bridge to the 30S subunit in the 70S ribosome.

Functionally, one of the primary rRNA binding proteins. Required for association of the 30S and 50S subunits to form the 70S ribosome, for tRNA binding and peptide bond formation. It has been suggested to have peptidyltransferase activity; this is somewhat controversial. Makes several contacts with the 16S rRNA in the 70S ribosome. The polypeptide is Large ribosomal subunit protein uL2 (Histophilus somni (strain 2336) (Haemophilus somnus)).